The chain runs to 144 residues: Actin-associated protein FAM107A (144 aa).

Residues 70–90 (VLEHRRRNQLIKKKEEELEAK) are a coiled coil. The Nuclear localization signal signature appears at 74–84 (RRRNQLIKKKE). The segment at 104–123 (QQRLNQLENPPQRDEDHAPE) is disordered. The span at 114 to 123 (PQRDEDHAPE) shows a compositional bias: basic and acidic residues.

In terms of assembly, interacts with ACTB. Interacts with F-actin. Interacts with PRDX1. Interacts with COMMD1; this interaction stabilizes COMMD1 in the nucleus. Interacts with MAP1A. Expressed in septum, the neocortex, the CA3 region of the hippocampus and the cerebellum (at protein level).

It localises to the nucleus. The protein localises to the cytoplasm. Its subcellular location is the cytoskeleton. The protein resides in the stress fiber. It is found in the cell junction. It localises to the focal adhesion. The protein localises to the cell projection. Its subcellular location is the ruffle membrane. The protein resides in the synapse. In terms of biological role, stress-inducible actin-binding protein that plays a role in synaptic and cognitive functions by modulating actin filamentous (F-actin) dynamics. Mediates polymerization of globular actin to F-actin. Also binds to, stabilizes and bundles F-actin. Involved in synaptic function by regulating neurite outgrowth in an actin-dependent manner and for the acquisition of hippocampus-dependent cognitive function, such as learning and long-term memory. Plays a role in the actin and microtubule cytoskeleton organization; negatively regulates focal adhesion (FA) assembly promoting malignant glial cell migration in an actin-, microtubule- and MAP1A-dependent manner. Also involved in neuroblastoma G1/S phase cell cycle progression and cell proliferation inhibition by stimulating ubiquitination of NF-kappa-B subunit RELA and NF-kappa-B degradation in a COMMD1- and actin-dependent manner. May play a role in tumor development. In Mus musculus (Mouse), this protein is Actin-associated protein FAM107A.